A 1053-amino-acid polypeptide reads, in one-letter code: Putative ABC transporter C family member 15 (1053 aa).

The ABC transmembrane type-1 1 domain occupies 1-180 (MSVDVQRITD…LPDLLSALVQ (180 aa)). 4 helical membrane passes run 11-31 (FIWYVNSIWMLPIQIFSAIYI), 36-56 (LGLGALAALVTTLMVMACNYP), 125-145 (FILWGAPSLISVVTFVTCMLM), and 151-171 (AGAVLSALATFQMLQSPIFGL). The region spanning 214–437 (VEIENGAFSW…NIGFEVLTQC (224 aa)) is the ABC transporter 1 domain. 249 to 256 (GAVGSGKS) contributes to the ATP binding site. The next 5 membrane-spanning stretches (helical) occupy residues 481–503 (LLVPFIILAQSCFQMLQIASNYW), 523–543 (ILLVYALLAAGSSLCVLARTI), 595–615 (MAVKLGWCAFSIIQIVGTIFV), 714–734 (LSHFVFAFSLVLLVTLPEGVI), and 738–758 (IAGLGVTYGLSLNVLQATVIW). The region spanning 483–765 (VPFIILAQSC…VIWNICNAEN (283 aa)) is the ABC transmembrane type-1 2 domain. One can recognise an ABC transporter 2 domain in the interval 804 to 1036 (FRDLQVRYAE…EDSFFSKLIK (233 aa)). 836-843 (GRTGSGKS) is a binding site for ATP.

It belongs to the ABC transporter superfamily. ABCC family. Conjugate transporter (TC 3.A.1.208) subfamily.

It localises to the membrane. It catalyses the reaction ATP + H2O + xenobioticSide 1 = ADP + phosphate + xenobioticSide 2.. In terms of biological role, pump for glutathione S-conjugates. In Arabidopsis thaliana (Mouse-ear cress), this protein is Putative ABC transporter C family member 15 (ABCC15).